A 62-amino-acid chain; its full sequence is Sperm protamine P1 (62 aa).

A disordered region spans residues 1-62 (MARYRHSRSR…RYSRRRRRRY (62 aa)).

This sequence belongs to the protamine P1 family. As to expression, testis.

Its subcellular location is the nucleus. The protein localises to the chromosome. Functionally, protamines substitute for histones in the chromatin of sperm during the haploid phase of spermatogenesis. They compact sperm DNA into a highly condensed, stable and inactive complex. In Thylogale stigmatica (Red-legged pademelon), this protein is Sperm protamine P1 (PRM1).